We begin with the raw amino-acid sequence, 474 residues long: Ubiquinol-cytochrome-c reductase complex core protein 2, mitochondrial (474 aa).

The N-terminal 42 residues, 1–42, are a transit peptide targeting the mitochondrion; that stretch reads MKSVVRSKGTQALFRRFSSALGDSINPNQVGVGDNVIRVNGR.

Belongs to the peptidase M16 family. UQCRC2/QCR2 subfamily. As to quaternary structure, component of the ubiquinol-cytochrome c oxidoreductase (cytochrome b-c1 complex, complex III, CIII), a multisubunit enzyme composed of 3 respiratory subunits cytochrome b, cytochrome c1 and Rieske protein, 2 core protein subunits, and additional low-molecular weight protein subunits. The complex exists as an obligatory dimer and forms supercomplexes (SCs) in the inner mitochondrial membrane with cytochrome c oxidase (complex IV, CIV).

It localises to the mitochondrion inner membrane. In terms of biological role, component of the ubiquinol-cytochrome c oxidoreductase, a multisubunit transmembrane complex that is part of the mitochondrial electron transport chain which drives oxidative phosphorylation. The respiratory chain contains 3 multisubunit complexes succinate dehydrogenase (complex II, CII), ubiquinol-cytochrome c oxidoreductase (cytochrome b-c1 complex, complex III, CIII) and cytochrome c oxidase (complex IV, CIV), that cooperate to transfer electrons derived from NADH and succinate to molecular oxygen, creating an electrochemical gradient over the inner membrane that drives transmembrane transport and the ATP synthase. The cytochrome b-c1 complex catalyzes electron transfer from ubiquinol to cytochrome c, linking this redox reaction to translocation of protons across the mitochondrial inner membrane, with protons being carried across the membrane as hydrogens on the quinol. In the process called Q cycle, 2 protons are consumed from the matrix, 4 protons are released into the intermembrane space and 2 electrons are passed to cytochrome c. The sequence is that of Ubiquinol-cytochrome-c reductase complex core protein 2, mitochondrial from Euglena gracilis.